A 544-amino-acid chain; its full sequence is Chaperonin GroEL (544 aa).

ATP-binding positions include 29–32 (TLGP), 86–90 (DGTTT), glycine 413, 476–478 (NAA), and aspartate 492.

Belongs to the chaperonin (HSP60) family. As to quaternary structure, forms a cylinder of 14 subunits composed of two heptameric rings stacked back-to-back. Interacts with the co-chaperonin GroES.

It localises to the cytoplasm. It catalyses the reaction ATP + H2O + a folded polypeptide = ADP + phosphate + an unfolded polypeptide.. Functionally, together with its co-chaperonin GroES, plays an essential role in assisting protein folding. The GroEL-GroES system forms a nano-cage that allows encapsulation of the non-native substrate proteins and provides a physical environment optimized to promote and accelerate protein folding. This is Chaperonin GroEL from Bacillus cereus (strain B4264).